Here is a 192-residue protein sequence, read N- to C-terminus: Secreted phosphoprotein 24 (192 aa).

The signal sequence occupies residues 1–29; it reads MGKTPEDFERHTMRSLIFVLALSVFTCSG. 2 disulfides stabilise this stretch: Cys-92–Cys-103 and Cys-116–Cys-134. Residues 155–192 are disordered; that stretch reads TDPRKRGSSRSEAFSSRGRGHSNGDWRKPDYTSPGKVE.

This sequence belongs to the SPP2 family. In terms of processing, multiply phosphorylated at serine residues.

It localises to the secreted. Its function is as follows. Could coordinate an aspect of bone turnover. In Gallus gallus (Chicken), this protein is Secreted phosphoprotein 24 (SPP2).